We begin with the raw amino-acid sequence, 341 residues long: tRNA N6-adenosine threonylcarbamoyltransferase (341 aa).

Positions 111 and 115 each coordinate Fe cation. Substrate is bound by residues 134 to 138, aspartate 167, glycine 180, and asparagine 276; that span reads LVSGG. Aspartate 304 contributes to the Fe cation binding site.

The protein belongs to the KAE1 / TsaD family. The cofactor is Fe(2+).

Its subcellular location is the cytoplasm. It carries out the reaction L-threonylcarbamoyladenylate + adenosine(37) in tRNA = N(6)-L-threonylcarbamoyladenosine(37) in tRNA + AMP + H(+). Its function is as follows. Required for the formation of a threonylcarbamoyl group on adenosine at position 37 (t(6)A37) in tRNAs that read codons beginning with adenine. Is involved in the transfer of the threonylcarbamoyl moiety of threonylcarbamoyl-AMP (TC-AMP) to the N6 group of A37, together with TsaE and TsaB. TsaD likely plays a direct catalytic role in this reaction. This chain is tRNA N6-adenosine threonylcarbamoyltransferase, found in Pseudomonas aeruginosa (strain LESB58).